The sequence spans 430 residues: RNA polymerase-associated protein LEO1 (430 aa).

Over residues 1-10 (MSSSEGNSDA) the composition is skewed to polar residues. Positions 1 to 128 (MSSSEGNSDA…SRGSLNDLQG (128 aa)) are disordered. Over residues 18–30 (KSSTPSSRGSSPD) the composition is skewed to low complexity. Over residues 99–119 (REGKPKESNTRARLSDSDAES) the composition is skewed to basic and acidic residues. 2 coiled-coil regions span residues 326 to 347 (TRRE…RTQM) and 409 to 429 (EEYR…DEES). The tract at residues 349–430 (RNNFKVRGPR…QIVTSDEESD (82 aa)) is disordered.

The protein belongs to the LEO1 family. Component of the PAF1 complex which consists of at least cdc-73, ctr-9, leo-1, pafo-1 and rtfo-1.

The protein resides in the nucleus. Its subcellular location is the cytoplasm. Functionally, component of the PAF1 complex which is a multifunctional complex involved in transcription initiation via genetic interactions with TATA-binding proteins, elongation and transcription-coupled histone modification. The sequence is that of RNA polymerase-associated protein LEO1 from Caenorhabditis elegans.